A 224-amino-acid chain; its full sequence is Enolase-phosphatase E1 (224 aa).

It belongs to the HAD-like hydrolase superfamily. MasA/MtnC family. In terms of assembly, monomer. Mg(2+) serves as cofactor.

It catalyses the reaction 5-methylsulfanyl-2,3-dioxopentyl phosphate + H2O = 1,2-dihydroxy-5-(methylsulfanyl)pent-1-en-3-one + phosphate. The protein operates within amino-acid biosynthesis; L-methionine biosynthesis via salvage pathway; L-methionine from S-methyl-5-thio-alpha-D-ribose 1-phosphate: step 3/6. Its pathway is amino-acid biosynthesis; L-methionine biosynthesis via salvage pathway; L-methionine from S-methyl-5-thio-alpha-D-ribose 1-phosphate: step 4/6. Functionally, bifunctional enzyme that catalyzes the enolization of 2,3-diketo-5-methylthiopentyl-1-phosphate (DK-MTP-1-P) into the intermediate 2-hydroxy-3-keto-5-methylthiopentenyl-1-phosphate (HK-MTPenyl-1-P), which is then dephosphorylated to form the acireductone 1,2-dihydroxy-3-keto-5-methylthiopentene (DHK-MTPene). The protein is Enolase-phosphatase E1 of Thioalkalivibrio sulfidiphilus (strain HL-EbGR7).